The primary structure comprises 658 residues: DNA ligase (658 aa).

NAD(+) contacts are provided by residues Asp-32–Asp-36 and Ser-81–Leu-82. Lys-112 functions as the N6-AMP-lysine intermediate in the catalytic mechanism. 3 residues coordinate NAD(+): Arg-133, Glu-167, and Lys-306. The Zn(2+) site is built by Cys-400, Cys-403, Cys-416, and Cys-421. The BRCT domain maps to Glu-577–Asn-658.

This sequence belongs to the NAD-dependent DNA ligase family. LigA subfamily. Requires Mg(2+) as cofactor. It depends on Mn(2+) as a cofactor.

The catalysed reaction is NAD(+) + (deoxyribonucleotide)n-3'-hydroxyl + 5'-phospho-(deoxyribonucleotide)m = (deoxyribonucleotide)n+m + AMP + beta-nicotinamide D-nucleotide.. Its function is as follows. DNA ligase that catalyzes the formation of phosphodiester linkages between 5'-phosphoryl and 3'-hydroxyl groups in double-stranded DNA using NAD as a coenzyme and as the energy source for the reaction. It is essential for DNA replication and repair of damaged DNA. The protein is DNA ligase of Helicobacter pylori (strain G27).